The following is a 242-amino-acid chain: 3-dehydroquinate dehydratase (242 aa).

3-dehydroquinate is bound by residues 39-41 (EVR) and R73. The Proton donor/acceptor role is filled by H135. K162 serves as the catalytic Schiff-base intermediate with substrate. 3-dehydroquinate-binding residues include R203 and Q228.

It belongs to the type-I 3-dehydroquinase family. As to quaternary structure, homodimer.

It catalyses the reaction 3-dehydroquinate = 3-dehydroshikimate + H2O. The protein operates within metabolic intermediate biosynthesis; chorismate biosynthesis; chorismate from D-erythrose 4-phosphate and phosphoenolpyruvate: step 3/7. Involved in the third step of the chorismate pathway, which leads to the biosynthesis of aromatic amino acids. Catalyzes the cis-dehydration of 3-dehydroquinate (DHQ) and introduces the first double bond of the aromatic ring to yield 3-dehydroshikimate. In Methanosarcina acetivorans (strain ATCC 35395 / DSM 2834 / JCM 12185 / C2A), this protein is 3-dehydroquinate dehydratase.